The chain runs to 361 residues: Phosphate acyltransferase (361 aa).

The interval 340 to 361 (VPADGAATEQGPTPRRIAPPRT) is disordered.

This sequence belongs to the PlsX family. As to quaternary structure, homodimer. Probably interacts with PlsY.

It localises to the cytoplasm. It carries out the reaction a fatty acyl-[ACP] + phosphate = an acyl phosphate + holo-[ACP]. It participates in lipid metabolism; phospholipid metabolism. Its function is as follows. Catalyzes the reversible formation of acyl-phosphate (acyl-PO(4)) from acyl-[acyl-carrier-protein] (acyl-ACP). This enzyme utilizes acyl-ACP as fatty acyl donor, but not acyl-CoA. The protein is Phosphate acyltransferase of Anaeromyxobacter dehalogenans (strain 2CP-1 / ATCC BAA-258).